A 175-amino-acid chain; its full sequence is MGKITFYEDRAFQGRSYECTTDCPNLQPYFSRCNSIRVESGCWMIYERPNYQGHQYFLRRGEYPDYQQWMGLSDSIRSCCLIPPHSGAYRMKIYDRDELRGQMSELTDDCISVQDRFHLTEIHSLNVLEGSWILYEMPNYRGRQYLLRPGEYRRFLDWGAPNAKVGSLRRVMDLY.

Beta/gamma crystallin 'Greek key' domains are found at residues G2–S40 and G41–P83. The segment at P84–A88 is connecting peptide. Beta/gamma crystallin 'Greek key' domains are found at residues Y89–E129 and G130–M172.

Belongs to the beta/gamma-crystallin family. In terms of assembly, monomer.

Functionally, crystallins are the dominant structural components of the vertebrate eye lens. The sequence is that of Gamma-crystallin B (CRYGB) from Homo sapiens (Human).